The sequence spans 93 residues: MPRSVKKGPFYDNHLLVKVLKQKDLKNKKVIKTWSRRSTILPQFRGNTFAVYNGRVHIPVYINEDMVGHKLGEFSPTRTYRGHDKKDKKIQKK.

A disordered region spans residues E73–K93.

Belongs to the universal ribosomal protein uS19 family.

Its function is as follows. Protein S19 forms a complex with S13 that binds strongly to the 16S ribosomal RNA. This is Small ribosomal subunit protein uS19 from Phytoplasma mali (strain AT).